Here is a 62-residue protein sequence, read N- to C-terminus: Ferredoxin-1 (62 aa).

4Fe-4S ferredoxin-type domains are found at residues 3 to 32 (WTVT…LQDG) and 33 to 62 (KAVP…VEEN). 2 residues coordinate [3Fe-4S] cluster: Cys-12 and Cys-18. Residues Cys-22, Cys-42, Cys-45, and Cys-48 each coordinate [4Fe-4S] cluster. Residue Cys-52 participates in [3Fe-4S] cluster binding.

Homodimer. The cofactor is [3Fe-4S] cluster. It depends on [4Fe-4S] cluster as a cofactor.

In terms of biological role, ferredoxins are iron-sulfur proteins that transfer electrons in a wide variety of metabolic reactions. This ferredoxin serves as a carrier for pyruvate dehydrogenase. The sequence is that of Ferredoxin-1 from Nitratidesulfovibrio vulgaris (strain DSM 19637 / Miyazaki F) (Desulfovibrio vulgaris).